The following is a 508-amino-acid chain: Photosystem II CP47 reaction center protein (508 aa).

A run of 6 helical transmembrane segments spans residues Ser-21–Ser-36, Ile-101–Trp-115, Gly-140–Phe-156, Ile-203–Ser-218, Val-237–Val-252, and Ser-457–Arg-472.

The protein belongs to the PsbB/PsbC family. PsbB subfamily. As to quaternary structure, PSII is composed of 1 copy each of membrane proteins PsbA, PsbB, PsbC, PsbD, PsbE, PsbF, PsbH, PsbI, PsbJ, PsbK, PsbL, PsbM, PsbT, PsbX, PsbY, PsbZ, Psb30/Ycf12, at least 3 peripheral proteins of the oxygen-evolving complex and a large number of cofactors. It forms dimeric complexes. Binds multiple chlorophylls. PSII binds additional chlorophylls, carotenoids and specific lipids. is required as a cofactor.

The protein resides in the plastid. Its subcellular location is the chloroplast thylakoid membrane. Functionally, one of the components of the core complex of photosystem II (PSII). It binds chlorophyll and helps catalyze the primary light-induced photochemical processes of PSII. PSII is a light-driven water:plastoquinone oxidoreductase, using light energy to abstract electrons from H(2)O, generating O(2) and a proton gradient subsequently used for ATP formation. The polypeptide is Photosystem II CP47 reaction center protein (Morus indica (Mulberry)).